Consider the following 202-residue polypeptide: Tetranectin (202 aa).

Residues 1–21 (MGFWGTYLLFCLFSFLSQLTA) form the signal peptide. 3 disulfides stabilise this stretch: C71/C81, C98/C197, and C173/C189. The C-type lectin domain maps to 77 to 198 (VNLKCLLAFT…CRDQLPYICQ (122 aa)).

Homotrimer. As to expression, highest expression in lung, skeletal muscle and heart. Expressed in retina.

It is found in the secreted. Tetranectin binds to plasminogen and to isolated kringle 4. May be involved in the packaging of molecules destined for exocytosis. Plays a role in retinal function. This Mus musculus (Mouse) protein is Tetranectin (Clec3b).